The sequence spans 474 residues: ATP synthase subunit beta 1 (474 aa).

157–164 contacts ATP; that stretch reads GGAGVGKT.

Belongs to the ATPase alpha/beta chains family. F-type ATPases have 2 components, CF(1) - the catalytic core - and CF(0) - the membrane proton channel. CF(1) has five subunits: alpha(3), beta(3), gamma(1), delta(1), epsilon(1). CF(0) has three main subunits: a(1), b(2) and c(9-12). The alpha and beta chains form an alternating ring which encloses part of the gamma chain. CF(1) is attached to CF(0) by a central stalk formed by the gamma and epsilon chains, while a peripheral stalk is formed by the delta and b chains.

The protein resides in the cell inner membrane. It carries out the reaction ATP + H2O + 4 H(+)(in) = ADP + phosphate + 5 H(+)(out). Functionally, produces ATP from ADP in the presence of a proton gradient across the membrane. The catalytic sites are hosted primarily by the beta subunits. The chain is ATP synthase subunit beta 1 from Albidiferax ferrireducens (strain ATCC BAA-621 / DSM 15236 / T118) (Rhodoferax ferrireducens).